We begin with the raw amino-acid sequence, 600 residues long: ATP-dependent RNA helicase DDX55 (600 aa).

The short motif at 9-37 is the Q motif element; the sequence is WESLQVPLHPRVLGALRELGFPHMTPVQS. A Helicase ATP-binding domain is found at 40-223; it reads IPLFMKNKDV…RAGLRNPVRI (184 aa). 53-60 contributes to the ATP binding site; sequence AVTGSGKT. The short motif at 171–174 is the DEAD box element; sequence DEAD. Residues 254–402 enclose the Helicase C-terminal domain; it reads KFNQLVHFLR…EMSLQRNTID (149 aa). Residues 499–513 show a composition bias toward basic and acidic residues; it reads LEQKRKERSENEGRK. The disordered stretch occupies residues 499–551; it reads LEQKRKERSENEGRKKFIKNKAWSKQKAKKERKKKMNAKRKKDEGSDIDDEDM. Basic residues predominate over residues 514 to 538; sequence KFIKNKAWSKQKAKKERKKKMNAKR. The segment at 533–562 is important for nuclear localization; it reads KMNAKRKKDEGSDIDDEDMEELLNDTRLLK. 2 positions are modified to phosphoserine: S544 and S594.

The protein belongs to the DEAD box helicase family. DDX55/SPB4 subfamily. Interacts with 28S rRNA. Interacts with double-stranded RNA substrates in vitro; the interaction stimulates ATPase activity.

It localises to the nucleus. It is found in the nucleoplasm. The enzyme catalyses ATP + H2O = ADP + phosphate + H(+). Probable ATP-binding RNA helicase. Has ATPase activity and is involved in the maturation of precursor large subunit rRNAs. In Mus musculus (Mouse), this protein is ATP-dependent RNA helicase DDX55 (Ddx55).